Consider the following 290-residue polypeptide: HTH-type transcriptional regulator BudR (290 aa).

The HTH lysR-type domain occupies 1–58 (MELRYLRYFVAVAEARNFTRAAHDLGISQPPLSQQIQRLEREIGTPLLRRLTRGVELT). Positions 18-37 (FTRAAHDLGISQPPLSQQIQ) form a DNA-binding region, H-T-H motif.

Belongs to the LysR transcriptional regulatory family.

Regulator of the budABC operon for 2,3-butanediol synthesis. This Raoultella terrigena (Klebsiella terrigena) protein is HTH-type transcriptional regulator BudR (budR).